We begin with the raw amino-acid sequence, 1217 residues long: ATP-dependent helicase/nuclease subunit A (1217 aa).

In terms of domain architecture, UvrD-like helicase ATP-binding spans 10–475 (VIWTDAQWQS…MDLSQNFRSR (466 aa)). ATP is bound at residue 31-38 (AAAGSGKT). The 296-residue stretch at 491 to 786 (DEQVGEVNYD…RMMTIHSSKG (296 aa)) folds into the UvrD-like helicase C-terminal domain.

This sequence belongs to the helicase family. AddA subfamily. As to quaternary structure, heterodimer of AddA and AddB/RexB. Mg(2+) is required as a cofactor.

The catalysed reaction is Couples ATP hydrolysis with the unwinding of duplex DNA by translocating in the 3'-5' direction.. It catalyses the reaction ATP + H2O = ADP + phosphate + H(+). In terms of biological role, the heterodimer acts as both an ATP-dependent DNA helicase and an ATP-dependent, dual-direction single-stranded exonuclease. Recognizes the chi site generating a DNA molecule suitable for the initiation of homologous recombination. The AddA nuclease domain is required for chi fragment generation; this subunit has the helicase and 3' -&gt; 5' nuclease activities. The sequence is that of ATP-dependent helicase/nuclease subunit A from Staphylococcus aureus (strain bovine RF122 / ET3-1).